We begin with the raw amino-acid sequence, 887 residues long: Bifunctional uridylyltransferase/uridylyl-removing enzyme (887 aa).

The segment at M1–E337 is uridylyltransferase. Positions V339–V699 are uridylyl-removing. Residues V457–L579 form the HD domain. ACT domains follow at residues Q700–R782 and M809–H887.

Belongs to the GlnD family. It depends on Mg(2+) as a cofactor.

It carries out the reaction [protein-PII]-L-tyrosine + UTP = [protein-PII]-uridylyl-L-tyrosine + diphosphate. The enzyme catalyses [protein-PII]-uridylyl-L-tyrosine + H2O = [protein-PII]-L-tyrosine + UMP + H(+). With respect to regulation, uridylyltransferase (UTase) activity is inhibited by glutamine, while glutamine activates uridylyl-removing (UR) activity. Modifies, by uridylylation and deuridylylation, the PII regulatory proteins (GlnB and homologs), in response to the nitrogen status of the cell that GlnD senses through the glutamine level. Under low glutamine levels, catalyzes the conversion of the PII proteins and UTP to PII-UMP and PPi, while under higher glutamine levels, GlnD hydrolyzes PII-UMP to PII and UMP (deuridylylation). Thus, controls uridylylation state and activity of the PII proteins, and plays an important role in the regulation of nitrogen assimilation and metabolism. This chain is Bifunctional uridylyltransferase/uridylyl-removing enzyme, found in Acinetobacter baumannii (strain ACICU).